The following is a 712-amino-acid chain: Lactoperoxidase (712 aa).

The first 22 residues, 1 to 22, serve as a signal peptide directing secretion; it reads MWVCLQLPVFLASVTLFEVAAS. Residues 23 to 100 constitute a propeptide that is removed on maturation; that stretch reads DTIAQAASTT…WEESLKRLRR (78 aa). Asn106 carries an N-linked (GlcNAc...) asparagine glycan. Intrachain disulfides connect Cys123/Cys284, Cys132/Cys145, Cys246/Cys256, and Cys250/Cys274. Residue Asn212 is glycosylated (N-linked (GlcNAc...) asparagine). Asp225 is a binding site for heme b. His226 (proton acceptor) is an active-site residue. Residue Asp227 participates in Ca(2+) binding. The Ca(2+) site is built by Thr301, Phe303, Asp305, and Ser307. Residue Ser315 is modified to Phosphoserine. 2 N-linked (GlcNAc...) asparagine glycosylation sites follow: Asn322 and Asn358. The cysteines at positions 354 and 365 are disulfide-linked. Glu375 lines the heme b pocket. An N-linked (GlcNAc...) asparagine glycan is attached at Asn449. His468 contacts heme b. 3'-nitrotyrosine is present on Tyr482. Cystine bridges form between Cys573–Cys630 and Cys671–Cys696.

It belongs to the peroxidase family. XPO subfamily. It depends on Ca(2+) as a cofactor. The cofactor is heme b. Mammary gland; milk.

The protein resides in the secreted. It localises to the cytoplasm. It catalyses the reaction 2 a phenolic donor + H2O2 = 2 a phenolic radical donor + 2 H2O. It carries out the reaction thiocyanate + H2O2 + H(+) = hypothiocyanous acid + H2O. The enzyme catalyses iodide + H2O2 = hypoiodite + H2O. Functionally, heme-containing oxidoreductase which catalyzes the conversion of thiocyanate (SCN(-)) into antimicrobial agent hypothiocyanous acid (OSCN(-)) in the presence of hydrogen peroxide (H2O2). Also involved in the conversion of iodide (I(-)) into hypoiodite (IO(-)) in the presence of H2O2. Responsible for the inactivation of a wide range of micro-organisms and hence, important component of defense mechanism. The lactoperoxidase-SCN(-)-H2O2 system shows antibacterial properties against some streptococci strains. The lactoperoxidase-I(-)-H2O2 system shows antibacterial properties against E.coli. May protect the udder from infection and may promote growth in newborns. May be implicated in airway host defense against infection. May contribute to maintaining an appropriate H2O2 cellular level, therefore protecting cells from H2O2-caused injuries and inflammation. The polypeptide is Lactoperoxidase (LPO) (Bos taurus (Bovine)).